The chain runs to 184 residues: Large ribosomal subunit protein uL6 (184 aa).

It belongs to the universal ribosomal protein uL6 family. In terms of assembly, part of the 50S ribosomal subunit.

Its function is as follows. This protein binds to the 23S rRNA, and is important in its secondary structure. It is located near the subunit interface in the base of the L7/L12 stalk, and near the tRNA binding site of the peptidyltransferase center. The sequence is that of Large ribosomal subunit protein uL6 from Salinibacter ruber (strain DSM 13855 / M31).